Reading from the N-terminus, the 526-residue chain is pH-sensitive chloride channel 2 (526 aa).

The N-terminal stretch at 1–18 (MDTLGIFVLISYLGLSSA) is a signal peptide. Over 19-300 (AGVHLGDLQQ…VLLTREVGYY (282 aa)) the chain is Extracellular. N-linked (GlcNAc...) asparagine glycans are attached at residues N33, N42, N52, N192, N231, N264, N271, and N283. A helical membrane pass occupies residues 301–321 (VIDYFLPSIMIVTISWVSFWL). Topologically, residues 322–327 (QADQTP) are cytoplasmic. Residues 328 to 347 (ARTTLGCTTLLSFITLSLSQ) traverse the membrane as a helical segment. The Extracellular portion of the chain corresponds to 348–360 (ENNLMKVSYVTMS). The helical transmembrane segment at 361-381 (EVWFLVCTIFIFGSLVEFAFV) threads the bilayer. The Cytoplasmic portion of the chain corresponds to 382–505 (NTIWRRNNDL…VSLWIDRKMR (124 aa)). Residues 463-488 (ISLDEQDETSTSESSDSSKEKPAQTF) form a disordered region. A helical transmembrane segment spans residues 506 to 526 (FVFPLSFIVFNALFWTLVYCL).

It belongs to the ligand-gated ion channel (TC 1.A.9) family. In terms of tissue distribution, in third-instar larvae, expressed in the principal cells of the excretory Malpighian tubules (at protein level). Also detected in the enterocytes of the copper cell region and the iron cell region of the larval midgut (at protein level). In the copper cell region expression is confined to the interstitial cells and in the iron cell region it is expressed in the anterior portion (at protein level). Expressed in the Malpighian tubules and the middle midgut of third instar larvae and adults.

The protein resides in the apical cell membrane. The protein localises to the cell projection. It is found in the microvillus membrane. Its subcellular location is the late endosome membrane. It localises to the lysosome membrane. The catalysed reaction is chloride(in) = chloride(out). Its function is as follows. Ligand and pH-gated channel that mediates chloride transport primarily in the mid-gut and thereby functions in larval metabolism and fluid homeostasis. Channel opening is triggered by zinc binding or, to a lesser extent, an increase in extracellular pH. Zinc-dependent activity in the mid-gut is required for modulating Tor-dependent metabolic programs that promote larval feeding and systematic growth. It may therefore act as an intestinal zinc sensor that mediates larval growth and metabolism in response to micronutrient availability. Activates Tor signaling via its activity in maintaining lysosome homeostasis in interstitial cells and/or by its role in activating the release of insulin-like peptides in the brain after feeding, via an unknown mechanism. Functions in lysosome homeostasis by regulating chloride transport into enterocyte lysosomes to sustain V-ATPase function which maintains lysosomal acidification and consequently promotes Tor activation at the lysosome membrane. Also appears to play a role in regulating fluid secretion and osmotic homeostasis in Malpighian tubules in response to the pH of extracellular urine. This function is important for proper urine production during diuresis. This chain is pH-sensitive chloride channel 2, found in Drosophila melanogaster (Fruit fly).